Here is a 1041-residue protein sequence, read N- to C-terminus: Protein SMAX1-like (1041 aa).

The region spanning 8–188 is the Clp R domain; it reads IQQTLTPEAA…KSIIEQSLSA (181 aa). Repeat stretches follow at residues 12–98 and 117–188; these read LTPE…LDRL and VSNA…SLSA. Low complexity predominate over residues 189–205; it reads PSPCPSAAASTTTAGPG. Disordered regions lie at residues 189-214, 482-513, and 889-913; these read PSPC…PSPL, EAEQ…QNKA, and EGSH…VKRS. Basic and acidic residues predominate over residues 482-495; sequence EAEQTDKPASRPEA. A compositionally biased stretch (polar residues) spans 891-900; the sequence is SHNSSDVSVE.

It belongs to the ClpA/ClpB family.

Its function is as follows. May act downstream of MAX2 to negatively regulate karrikins/strigolactone responses. Acts probably specifically in the karrikin pathway. May function in a transcriptional corepressor complex. The chain is Protein SMAX1-like from Oryza sativa subsp. japonica (Rice).